Reading from the N-terminus, the 358-residue chain is MREYKIAAIPADGIGPEVIAAGLQVLEALEQRSGDFKIHTETFDWGSDYYKKHGVMMPADGLDKLKKFDAIFFGAVGAPDVPDHITLWGLRLPICQGFDQYANVRPTKILPGITPPLRNCGPGDLDWVIVRENSEGEYSGHGGRAHRGLPEEVGTEVAIFTRVGVTRIMRYAFKLAQARPRKLLTVVTKSNAQRHGMVMWDEIAAEVATEFPDVTWDKMLVDAMTVRMTLKPETLDTIVATNLHADILSDLAGALAGSLGVAPTANIDPERRFPSMFEPIHGSAFDITGKGIANPIATFWTAAQMLEHLGERDAAARLMSAVERVTEAGILTPDVGGTANTSQVTEAVCNAIAGSNII.

Mn(2+) is bound by residues Asp-222, Asp-246, and Asp-250.

It belongs to the isocitrate and isopropylmalate dehydrogenases family. It depends on Mg(2+) as a cofactor. The cofactor is Mn(2+). Requires K(+) as cofactor.

It is found in the cytoplasm. It catalyses the reaction tartrate + NAD(+) = 2-hydroxy-3-oxosuccinate + NADH + H(+). The enzyme catalyses (2R,3S)-tartrate + NAD(+) = 2-hydroxy-3-oxosuccinate + NADH + H(+). The catalysed reaction is (2R,3R)-tartrate + NAD(+) = 2-hydroxy-3-oxosuccinate + NADH + H(+). It carries out the reaction (2R,3R)-tartrate + H(+) = (R)-glycerate + CO2. It catalyses the reaction (R)-malate + NAD(+) = pyruvate + CO2 + NADH. The protein operates within carbohydrate acid metabolism; tartrate degradation; 2-hydroxy-3-oxosuccinate from L-tartrate: step 1/1. It participates in carbohydrate acid metabolism; tartrate degradation; 2-hydroxy-3-oxosuccinate from meso-tartrate: step 1/1. It functions in the pathway carbohydrate acid metabolism; tartrate degradation; D-glycerate from L-tartrate: step 1/1. In terms of biological role, has multiple catalytic activities. Apart from catalyzing the oxidation of (+)-tartrate to oxaloglycolate, also converts meso-tartrate to D-glycerate and catalyzes the oxidative decarboxylation of D-malate to pyruvate. The sequence is that of Probable tartrate dehydrogenase/decarboxylase TtuC' (ttuC') from Agrobacterium vitis (Rhizobium vitis).